The primary structure comprises 317 residues: Thymidylate synthase (317 aa).

DUMP is bound by residues Arg-40 and 167–168; that span reads RR. The active-site Nucleophile is the Cys-187. DUMP-binding positions include 216 to 219, Asn-227, and 257 to 259; these read RSCD and HVY. Position 219 (Asp-219) interacts with (6R)-5,10-methylene-5,6,7,8-tetrahydrofolate.

This sequence belongs to the thymidylate synthase family. In terms of assembly, homodimer.

It carries out the reaction dUMP + (6R)-5,10-methylene-5,6,7,8-tetrahydrofolate = 7,8-dihydrofolate + dTMP. It functions in the pathway pyrimidine metabolism; dTTP biosynthesis. The protein is Thymidylate synthase (TMP1) of Cryptococcus neoformans var. neoformans serotype D (strain B-3501A) (Filobasidiella neoformans).